The following is a 448-amino-acid chain: Ribosomal protein uS12 methylthiotransferase RimO (448 aa).

The MTTase N-terminal domain occupies 7–123 (EKVSLVSLGC…IAEIIAEKEG (117 aa)). [4Fe-4S] cluster contacts are provided by Cys16, Cys52, Cys86, Cys161, Cys165, and Cys168. One can recognise a Radical SAM core domain in the interval 147 to 377 (SSPYYTAYLK…MRTQARVSFK (231 aa)). One can recognise a TRAM domain in the interval 380-448 (RSLVDTEELV…DYDLIGEIVP (69 aa)).

This sequence belongs to the methylthiotransferase family. RimO subfamily. [4Fe-4S] cluster serves as cofactor.

Its subcellular location is the cytoplasm. The enzyme catalyses L-aspartate(89)-[ribosomal protein uS12]-hydrogen + (sulfur carrier)-SH + AH2 + 2 S-adenosyl-L-methionine = 3-methylsulfanyl-L-aspartate(89)-[ribosomal protein uS12]-hydrogen + (sulfur carrier)-H + 5'-deoxyadenosine + L-methionine + A + S-adenosyl-L-homocysteine + 2 H(+). Functionally, catalyzes the methylthiolation of an aspartic acid residue of ribosomal protein uS12. The sequence is that of Ribosomal protein uS12 methylthiotransferase RimO from Geotalea uraniireducens (strain Rf4) (Geobacter uraniireducens).